The following is a 550-amino-acid chain: Formin-binding protein 1-like (550 aa).

An F-BAR domain is found at 1–263; the sequence is MSWGTELWDQ…AAKSVDERRD (263 aa). 2 coiled-coil regions span residues 66 to 258 and 334 to 426; these read FTSC…AKSV and LEDF…QRSE. An REM-1 domain is found at 339–416; the sequence is HLPPEQRRKR…IHKNEAWLSE (78 aa). Positions 423 to 432 are enriched in basic and acidic residues; sequence QRSERRHSAE. Residues 423 to 467 form a disordered region; sequence QRSERRHSAEANHLVAQGRESPEGSYTEDANQEGRVQPQPHAHPE. In terms of domain architecture, SH3 spans 479–540; that stretch reads PAIGHCKSLY…PTSYIDITLE (62 aa).

The protein belongs to the FNBP1 family. As to quaternary structure, homodimerizes, the dimers can polymerize end-to-end to form filamentous structures. Interacts with GTP-bound cdc42 and wasl/n-wasp.

The protein localises to the cytoplasm. The protein resides in the cytoskeleton. It is found in the cell cortex. Its subcellular location is the cytoplasmic vesicle. It localises to the cell membrane. In terms of biological role, required to coordinate membrane tubulation with reorganization of the actin cytoskeleton during endocytosis. Promotes cdc42-induced actin polymerization by activating the wasl-waspip complex, the predominant form of wasl/n-wasp in cells. Essential for autophagy of intracellular bacterial pathogens. This is Formin-binding protein 1-like (fnbp1l) from Xenopus tropicalis (Western clawed frog).